The primary structure comprises 337 residues: Holliday junction branch migration complex subunit RuvB (337 aa).

The segment at 1–180 is large ATPase domain (RuvB-L); it reads MTRLISADKS…FGVISRLEFY (180 aa). ATP-binding positions include Leu-19, Arg-20, Gly-61, Lys-64, Thr-65, Thr-66, 127–129, Arg-170, Tyr-180, and Arg-217; that span reads EDF. Position 65 (Thr-65) interacts with Mg(2+). Positions 181–251 are small ATPAse domain (RuvB-S); that stretch reads THDELAFIIT…VADQALALLE (71 aa). Residues 254 to 337 are head domain (RuvB-H); that stretch reads EMGFDMMDRA…APEPPQGKLF (84 aa). DNA-binding residues include Arg-309 and Arg-314.

The protein belongs to the RuvB family. As to quaternary structure, homohexamer. Forms an RuvA(8)-RuvB(12)-Holliday junction (HJ) complex. HJ DNA is sandwiched between 2 RuvA tetramers; dsDNA enters through RuvA and exits via RuvB. An RuvB hexamer assembles on each DNA strand where it exits the tetramer. Each RuvB hexamer is contacted by two RuvA subunits (via domain III) on 2 adjacent RuvB subunits; this complex drives branch migration. In the full resolvosome a probable DNA-RuvA(4)-RuvB(12)-RuvC(2) complex forms which resolves the HJ.

The protein resides in the cytoplasm. It catalyses the reaction ATP + H2O = ADP + phosphate + H(+). The RuvA-RuvB-RuvC complex processes Holliday junction (HJ) DNA during genetic recombination and DNA repair, while the RuvA-RuvB complex plays an important role in the rescue of blocked DNA replication forks via replication fork reversal (RFR). RuvA specifically binds to HJ cruciform DNA, conferring on it an open structure. The RuvB hexamer acts as an ATP-dependent pump, pulling dsDNA into and through the RuvAB complex. RuvB forms 2 homohexamers on either side of HJ DNA bound by 1 or 2 RuvA tetramers; 4 subunits per hexamer contact DNA at a time. Coordinated motions by a converter formed by DNA-disengaged RuvB subunits stimulates ATP hydrolysis and nucleotide exchange. Immobilization of the converter enables RuvB to convert the ATP-contained energy into a lever motion, pulling 2 nucleotides of DNA out of the RuvA tetramer per ATP hydrolyzed, thus driving DNA branch migration. The RuvB motors rotate together with the DNA substrate, which together with the progressing nucleotide cycle form the mechanistic basis for DNA recombination by continuous HJ branch migration. Branch migration allows RuvC to scan DNA until it finds its consensus sequence, where it cleaves and resolves cruciform DNA. The chain is Holliday junction branch migration complex subunit RuvB from Geobacter sp. (strain M21).